The sequence spans 42 residues: uncharacterized protein (42 aa).

A helical transmembrane segment spans residues 18-38 (VGAISLTVMMILFFIAIVWFL).

The protein localises to the host membrane. This is an uncharacterized protein from His1 virus (isolate Australia/Victoria) (His1V).